We begin with the raw amino-acid sequence, 244 residues long: MSQLDLNALNELPKVDRVLALAETNAQLETLTAEERVAWALENLPGEYVLSSSFGIQAAVSLHLVNQIRPDIPVILTDTGYLFPETYQFIDELTDKLKLNLKVYRAGESPAWQEARYGKLWEQGVEGIEKYNEINKVEPMNRALKELKAQTWFAGLRREQSGSRAHLPVLAIQRGVFKVLPIIDWDNRTVYQYLQKHGLKYHPLWDQGYLSVGDTHTTRKWEPGMAEEETRFFGLKRECGLHEG.

Residue cysteine 239 is the Nucleophile; cysteine thiosulfonate intermediate of the active site.

The protein belongs to the PAPS reductase family. CysH subfamily.

It localises to the cytoplasm. It catalyses the reaction [thioredoxin]-disulfide + sulfite + adenosine 3',5'-bisphosphate + 2 H(+) = [thioredoxin]-dithiol + 3'-phosphoadenylyl sulfate. Its pathway is sulfur metabolism; hydrogen sulfide biosynthesis; sulfite from sulfate: step 3/3. Functionally, catalyzes the formation of sulfite from phosphoadenosine 5'-phosphosulfate (PAPS) using thioredoxin as an electron donor. This chain is Phosphoadenosine 5'-phosphosulfate reductase, found in Salmonella heidelberg (strain SL476).